A 522-amino-acid chain; its full sequence is Glutamate--cysteine ligase (522 aa).

Belongs to the glutamate--cysteine ligase type 1 family. Type 1 subfamily.

It carries out the reaction L-cysteine + L-glutamate + ATP = gamma-L-glutamyl-L-cysteine + ADP + phosphate + H(+). It participates in sulfur metabolism; glutathione biosynthesis; glutathione from L-cysteine and L-glutamate: step 1/2. The protein is Glutamate--cysteine ligase of Shewanella pealeana (strain ATCC 700345 / ANG-SQ1).